Reading from the N-terminus, the 287-residue chain is Bifunctional protein FolD (287 aa).

NADP(+)-binding positions include 160–162, Ser189, and Thr230; that span reads GRS.

Belongs to the tetrahydrofolate dehydrogenase/cyclohydrolase family. Homodimer.

It catalyses the reaction (6R)-5,10-methylene-5,6,7,8-tetrahydrofolate + NADP(+) = (6R)-5,10-methenyltetrahydrofolate + NADPH. The enzyme catalyses (6R)-5,10-methenyltetrahydrofolate + H2O = (6R)-10-formyltetrahydrofolate + H(+). Its pathway is one-carbon metabolism; tetrahydrofolate interconversion. Catalyzes the oxidation of 5,10-methylenetetrahydrofolate to 5,10-methenyltetrahydrofolate and then the hydrolysis of 5,10-methenyltetrahydrofolate to 10-formyltetrahydrofolate. The protein is Bifunctional protein FolD of Chlamydia caviae (strain ATCC VR-813 / DSM 19441 / 03DC25 / GPIC) (Chlamydophila caviae).